The following is a 528-amino-acid chain: Ulvan lyase, short isoform (528 aa).

The N-terminal stretch at 1 to 29 (MKINLSMRELVSRLSTTLKTAIALSVLTA) is a signal peptide. Cys-30 carries the N-palmitoyl cysteine lipid modification. Cys-30 is lipidated: S-diacylglycerol cysteine. 151-152 (SH) is a binding site for substrate. Residue His-152 is the Proton donor/acceptor of the active site. Asp-218, Asp-228, and Lys-230 together coordinate Ca(2+). Residues Tyr-309 and Arg-326 each coordinate substrate. The Ca(2+) site is built by Asn-329, Asp-332, and Phe-334. A substrate-binding site is contributed by His-390.

The protein belongs to the polysaccharide lyase 24 family.

The protein resides in the secreted. The protein localises to the cell membrane. Ulvan lyase involved in ulvan degradation. Ulvan is the main polysaccharide component of the Ulvales (green seaweed) cell wall. It is composed of disaccharide building blocks comprising 3-sulfated rhamnose (Rha3S) linked to D-glucuronic acid (GlcA), L-iduronic acid (IduA), or D-xylose (Xyl). Ulvan lyase catalyzes preferentially the endolytic cleavage of the glycosidic bond between Rha3S and the uronic acid GlcA, but not IduA, producing oligosaccharides that have unsaturated 4-deoxy-L-threo-hex-4-enopyranosiduronic acid (deltaUA) at the non-reducing end. The most abundant end products in the degradation of the ulvan polysaccharide were deltaUA-Rha3S disaccharides and deltaUA-Rha3S-IduA-Rha3S and deltaUA-Rha3S-Xyl-Rha3S tetrasaccharides. The protein is Ulvan lyase, short isoform of Alteromonas sp. (strain LOR).